Consider the following 472-residue polypeptide: Mitochondrial substrate carrier family protein C (472 aa).

At 1-189 (MVLNENDKEF…ASSLRNTITY (189 aa)) the chain is on the mitochondrial intermembrane side. EF-hand domains are found at residues 6 to 41 (NDKEFVKKLFDSLDKDNNGKLTREEIKEGFFKLRIP), 42 to 70 (SSEKDIESFLTNVDKDKDGSVSFKEFEDF), 73 to 108 (ENIKKLKIVFEELDTNKSGTLDIHEIEESIKKLNIP), and 110 to 145 (YSEQELIRLFHRIDKNRDNQIDFNEWRELLVLLPNS). The Ca(2+) site is built by Asp-19, Asp-21, Asn-23, Lys-25, Glu-30, Asp-55, Asp-57, Asp-59, Ser-61, Glu-66, Asp-86, Asn-88, Ser-90, Thr-92, Glu-97, Asp-123, Asn-125, Asp-127, Gln-129, and Glu-134. Solcar repeat units lie at residues 184 to 268 (RNTI…VKKL), 276 to 362 (LTSA…LKHK), and 375 to 461 (GQLL…FKKA). The chain crosses the membrane as a helical span at residues 190–207 (MLAGSVAGFASRTSTAPL). Residues 208–242 (ERVKIMCQLNHGKPISLISAFKACYKDGGIKGFFR) are Mitochondrial matrix-facing. A helical membrane pass occupies residues 243–263 (GNLANIIKVSPESAVKFGTYE). At 264–281 (YVKKLFAENDCELTSAQR) the chain is on the mitochondrial intermembrane side. A helical membrane pass occupies residues 282–302 (FISGSVAGVVSHTTLFPLEVV). The Mitochondrial matrix segment spans residues 303–330 (RLRLSAEIAGTYNGIFDCFKKIAISEKS). Residues 331-351 (IRPFYRGLGASITATIPHSGV) form a helical membrane-spanning segment. Residues 352-377 (NMMVYEFLKHKVIKMTGNEFPTAGQL) lie on the Mitochondrial intermembrane side of the membrane. Residues 378–398 (LVCASTSSVCGQLVGYPFHVV) traverse the membrane as a helical segment. Residues 399 to 441 (KSRLITQGSSVNQEKYTGLFDGLTKIIKKEGPIGLYKGIVPSF) lie on the Mitochondrial matrix side of the membrane. The chain crosses the membrane as a helical span at residues 442 to 462 (MKSIPSHSITFIVYEGFKKAF). Topologically, residues 463–472 (DVNLKEKKHH) are mitochondrial intermembrane.

The protein belongs to the mitochondrial carrier (TC 2.A.29) family.

It localises to the mitochondrion inner membrane. Calcium-dependent mitochondrial solute carrier. Mitochondrial solute carriers shuttle metabolites, nucleotides, and cofactors through the mitochondrial inner membrane. This is Mitochondrial substrate carrier family protein C (mcfC) from Dictyostelium discoideum (Social amoeba).